The primary structure comprises 107 residues: UPF0145 protein Memar_1285 (107 aa).

Belongs to the UPF0145 family.

The polypeptide is UPF0145 protein Memar_1285 (Methanoculleus marisnigri (strain ATCC 35101 / DSM 1498 / JR1)).